Consider the following 917-residue polypeptide: Major intrinsically disordered Notch2-binding receptor 1 (917 aa).

At 1-892 (MEANQEASLF…AEFRRAKVCK (892 aa)) the chain is on the cytoplasmic side. Disordered regions lie at residues 337–367 (STYF…WPAK), 388–410 (PSEE…GPDR), 461–483 (SCTS…QHVL), 568–588 (ITNG…NVHH), 652–687 (SEAP…CSDA), 706–727 (TRPS…IASI), and 746–783 (NEEE…LPKQ). Residues 461 to 480 (SCTSGQHSSDTSSVGTQTEQ) are compositionally biased toward polar residues. Basic and acidic residues predominate over residues 576-588 (KGDKCNRPENVHH). Ser712 bears the Phosphoserine mark. The helical transmembrane segment at 893–913 (IAALITAAACTVILVIVVPIC) threads the bilayer. Topologically, residues 914-917 (TMKS) are extracellular.

The protein belongs to the MINAR family. In terms of assembly, interacts with NOTCH2; this interaction increases MINAR1 stability. Interacts (via N-terminus) with DEPTOR (via PDZ domain); this interaction may stabilize DEPTOR protein by impairing its ubiquitination. In terms of tissue distribution, expressed in brain and in islets of Langerhans.

Its subcellular location is the cell membrane. Functionally, intrinsically disordered protein which may negatively regulate mTOR signaling pathway by stabilizing the mTOR complex component DEPTOR. Negatively regulates angiogenesis. Negatively regulates cell growth. Negatively regulates neurite outgrowth in hippocampal neurons. The protein is Major intrinsically disordered Notch2-binding receptor 1 (Minar1) of Mus musculus (Mouse).